The sequence spans 331 residues: Lipoate-protein ligase LplJ (331 aa).

The 188-residue stretch at 27-214 folds into the BPL/LPL catalytic domain; that stretch reads DPEQQYLLFY…HIFNTNDVGN (188 aa). ATP-binding positions include Arg-69, 74 to 77, and Lys-131; that span reads GAVY. Residue Lys-131 participates in (R)-lipoate binding.

It belongs to the LplA family.

Its subcellular location is the cytoplasm. The catalysed reaction is L-lysyl-[lipoyl-carrier protein] + (R)-lipoate + ATP = N(6)-[(R)-lipoyl]-L-lysyl-[lipoyl-carrier protein] + AMP + diphosphate + H(+). It participates in protein modification; protein lipoylation via exogenous pathway; protein N(6)-(lipoyl)lysine from lipoate: step 1/2. The protein operates within protein modification; protein lipoylation via exogenous pathway; protein N(6)-(lipoyl)lysine from lipoate: step 2/2. Its function is as follows. Catalyzes both the ATP-dependent activation of exogenously supplied lipoate to lipoyl-AMP and the transfer of the activated lipoyl onto the lipoyl domains of lipoate-dependent enzymes. Is also able to use octanoate as substrate. The polypeptide is Lipoate-protein ligase LplJ (lplJ) (Bacillus subtilis (strain 168)).